The chain runs to 460 residues: uncharacterized protein (460 aa).

A TRAM domain is found at 6 to 64 (PVKKNSTYNLYITGMGTKGEGIGKINNFTIFVTGAILGEEVEVNIIKVNKNYAVGKLLN). The [4Fe-4S] cluster site is built by Cys77, Cys83, Cys86, and Cys163. S-adenosyl-L-methionine is bound by residues Gln287, Tyr316, Glu337, and Asp385. The active-site Nucleophile is the Cys412.

The protein belongs to the class I-like SAM-binding methyltransferase superfamily. RNA M5U methyltransferase family.

This is an uncharacterized protein from Clostridium tetani (strain Massachusetts / E88).